The chain runs to 394 residues: 3-amino-4-hydroxybenzoate 2-monooxygenase (394 aa).

FAD-binding residues include Ala16 and Arg109. The Proton acceptor role is filled by Tyr214. Asp287 contacts FAD.

It belongs to the 6-hydroxynicotinate 3-monooxygenase family. The cofactor is FAD.

It carries out the reaction 3-amino-4-hydroxybenzoate + NADPH + O2 + H(+) = 3-amino-2,4-dihydroxybenzoate + NADP(+) + H2O. The protein operates within antibiotic biosynthesis. Functionally, part of a gene cluster involved in the biosynthesis of cremeomycin, a light-sensitive o-diazoquinone with antibacterial and antiproliferative effects. Catalyzes the hydroxylation of 3-amino-4-hydroxybenzoate (3,4-AHBA) to 3-amino-2,4-dihydroxybenzoate (3,2,4-ADHBA). The sequence is that of 3-amino-4-hydroxybenzoate 2-monooxygenase from Streptomyces cremeus.